A 202-amino-acid chain; its full sequence is 7-methyl-GTP pyrophosphatase (202 aa).

Asp-70 acts as the Proton acceptor in catalysis.

This sequence belongs to the Maf family. YceF subfamily. Requires a divalent metal cation as cofactor.

Its subcellular location is the cytoplasm. The catalysed reaction is N(7)-methyl-GTP + H2O = N(7)-methyl-GMP + diphosphate + H(+). In terms of biological role, nucleoside triphosphate pyrophosphatase that hydrolyzes 7-methyl-GTP (m(7)GTP). May have a dual role in cell division arrest and in preventing the incorporation of modified nucleotides into cellular nucleic acids. This Pseudoalteromonas translucida (strain TAC 125) protein is 7-methyl-GTP pyrophosphatase.